Here is a 235-residue protein sequence, read N- to C-terminus: Caveolin-1 (235 aa).

The Cytoplasmic portion of the chain corresponds to 1 to 161; it reads MSTEQDIKTE…LVSLLALPFT (161 aa). A disordered region spans residues 29–72; that stretch reads GEAVVAPEEPKPKKNWFTFGKKKAAPTDETNIEEGGAPGDEPVK. An intramembrane region (helical) is located at residues 162–182; the sequence is IIFAIFFGLLASINVFIIVPL. At 183-235 the chain is on the cytoplasmic side; that stretch reads GKLLSIPGTLLAKLWNWLIHAIFDPIASAVGLIFSNFNIRKYGINQETTAPCV. C234 carries S-palmitoyl cysteine lipidation.

Belongs to the caveolin family. Homooligomer containing 14-16 monomers per oligomer.

The protein resides in the golgi apparatus membrane. Its subcellular location is the cell membrane. It is found in the membrane. The protein localises to the caveola. May act as a scaffolding protein within caveolar membranes. Interacts directly with G-protein alpha subunits and can functionally regulate their activity. In Caenorhabditis elegans, this protein is Caveolin-1 (cav-1).